Here is a 509-residue protein sequence, read N- to C-terminus: Cytochrome P450 6A1 (509 aa).

Cysteine 449 lines the heme pocket.

The protein belongs to the cytochrome P450 family. Heme serves as cofactor.

The protein localises to the endoplasmic reticulum membrane. Its subcellular location is the microsome membrane. It carries out the reaction an organic molecule + reduced [NADPH--hemoprotein reductase] + O2 = an alcohol + oxidized [NADPH--hemoprotein reductase] + H2O + H(+). Functionally, involved in the metabolism of insect hormones and in the breakdown of synthetic insecticides. This chain is Cytochrome P450 6A1 (CYP6A1), found in Musca domestica (House fly).